The chain runs to 718 residues: Methionine--tRNA ligase (718 aa).

The 'HIGH' region motif lies at proline 12–histidine 22. Residues cysteine 143, cysteine 146, cysteine 156, and cysteine 159 each contribute to the Zn(2+) site. The 'KMSKS' region signature appears at lysine 349–serine 353. Lysine 352 lines the ATP pocket. The disordered stretch occupies residues alanine 573–threonine 599. In terms of domain architecture, tRNA-binding spans aspartate 608 to lysine 718.

The protein belongs to the class-I aminoacyl-tRNA synthetase family. MetG type 1 subfamily. Homodimer. It depends on Zn(2+) as a cofactor.

The protein resides in the cytoplasm. The enzyme catalyses tRNA(Met) + L-methionine + ATP = L-methionyl-tRNA(Met) + AMP + diphosphate. In terms of biological role, is required not only for elongation of protein synthesis but also for the initiation of all mRNA translation through initiator tRNA(fMet) aminoacylation. The protein is Methionine--tRNA ligase of Aromatoleum aromaticum (strain DSM 19018 / LMG 30748 / EbN1) (Azoarcus sp. (strain EbN1)).